Reading from the N-terminus, the 215-residue chain is MNKVYDWFEERLEVQAIADDISSKYVPPHVNIFYCFGGLVLTCFLIQVATGFAMTFYYRPSVVDAFASVEYIMTSVNFGWLIRSIHRWSASMMVLMMVLHVFRVYLTGGFKKPRELTWVTGVTLSVVTVSFGVTGYSLPWDQVGFWACKIVTGVPAAVPIVGEPLVLILRGGESVGQSTLTRFYSAHTFVLPLAAAVLMLTHFLMIRKQGISGPL.

Residues 32 to 52 form a helical membrane-spanning segment; it reads IFYCFGGLVLTCFLIQVATGF. Position 35 (C35) interacts with heme c. Positions 86 and 100 each coordinate heme b. 3 consecutive transmembrane segments (helical) span residues 90 to 110, 116 to 136, and 186 to 206; these read ASMM…TGGF, LTWV…VTGY, and AHTF…FLMI. Heme b is bound by residues H187 and H202.

The protein belongs to the cytochrome b family. PetB subfamily. As to quaternary structure, the 4 large subunits of the cytochrome b6-f complex are cytochrome b6, subunit IV (17 kDa polypeptide, PetD), cytochrome f and the Rieske protein, while the 4 small subunits are PetG, PetL, PetM and PetN. The complex functions as a dimer. Requires heme b as cofactor. It depends on heme c as a cofactor.

The protein resides in the plastid. The protein localises to the chloroplast thylakoid membrane. Its function is as follows. Component of the cytochrome b6-f complex, which mediates electron transfer between photosystem II (PSII) and photosystem I (PSI), cyclic electron flow around PSI, and state transitions. The polypeptide is Cytochrome b6 (Phaeodactylum tricornutum (strain CCAP 1055/1)).